A 2163-amino-acid chain; its full sequence is MGDYIWIEPVSGREFDVAIGARVISAEGRRIQVRDDDGNELWLTPERRIKAMHASSVQGVEDMISLGDLHEAGILRNLLIRYNDNLIYTYTGSILVAVNPYQILPIYTADQIKLYKERKIGELPPHIFAIGDNSYANMRRYGQDQCIVISGESGAGKTESTKLILQYLAAISGKHSWIEQQILEANPILEAFGNAKTVRNDNSSRFGKYIDIHFNNSGVIEGAEIEQYLLEKSRIVSQNAEERNYHIFYCLLAGLSSDEKRKLNLGYASDYRYLTGGGCIKCDGRNDAAEFADIRSAMKVLCFSDHEIWEILKLLAALLHTGNITYRATVIDNLDATEIPEHINVERVANLLEVPFQPFIDALTRKTLFAHGETVVSTLSRDQSMDVRDAFVKGIYGRLFVLIVKKINSAIYKPKSSTRSAIGVLDIFGFENFKHNSFEQFCINFANENLQQFFVRHIFKLEQEEYNHESINWQHIEFVDNQDALDLIAIKQLNIMALIDEESKFPKGTDQTMLAKLHKTHGTHRNYLKPKSDINTSFGLNHFAGVVFYDTRGFLEKNRDTFSADLLQLISSSTNRFLQMVFAEDIGMGAETRKRTPTLSTQFKKSLDSLMKTLSSCQPFFIRCIKPNELKKPMMFDRALCCRQLRYSGMMETIRIRRAGYPIRHKFKDFVERYRFLISGIPPAHRTDCRLATSKICASVLGRSDYQLGHTKVFLKDAHDLFLEQERDRVLTRKILILQRSIRGWVYRRRFLRMRQAAVTIQKFWKGYAQRQRYKKMKIGYMRLQALIRSRVLSHRFRHLRGHIVRLQARIRGYLVRREYGLKMWAVIKIQSHVRRMIAMNRYQKLKLEYRRHHEALRLRRMEEEELKHQGNKRAKEIAEQHYRDRLNEIERKEIEQELEERRRVEVKKNIINDAARKADEPVDDSKLVEAMFDFLPDSSSEAPTPHGGRETSVFNDLPVNQDNHEDIIGPIHTISEDEEDLSEFKFQKFAATYFQGNITHFYSRKPLKHPLLPLHTQGDQLAAQALWITILRFTGDLPEPRYHTMDRDNTSVMSKVTATLGRNFIRSKEFQEAQMMGLDPEAFLKQKPRSIRHKLVSLTLKRKNKLGEDVRRRLQDEEYTADSYQSWLESRPTSNLEKLHFIIGHGILRAELRDEIYCQICKQLTNNPSKSSHARGWILLSLCVGCFAPSEKFVNYLRSFIREGPPGYAPYCEERLKRTFNNGTRNQPPSWLELQATKSKKPIMLPITFMDGNTKTLLADSATTARELCNQLSDKIALKDQFGFSLYIALFDKVSSLGSGGDHVMDAISQCEQYAKEQGAQERNAPWRLFFRKEIFAPWHNPIEDQVATNLIYQQVVRGVKFGEYRCDKEEDLAMIAAQQYYIEYNTDMSMDRLYTLLPNFIPDYCLTGIEKAIDRWAALVLQAYKKSYYLKDKAAALKVKEDVVSYAKYKWPLLFSRFYEAYRNSGPNLPKNDVIIAVNWTGVYVVDDQEQVLLELSFPEITAVSSQKTNKVFTQTFSLSTVRNEEFTFQSPNAEDIRDLVVYFLEGLKKRSKFVIALQDYKAPGEGTSFLSFLKGDLIILEDESTGESVLNSGWCIGCCERTQERGDFPAEIVYVLPSLTKPPPDILALFSVEDAHHGKRLNSIHSNGGTETREHPHTLADYSLDHFRPPPKRTMSKALSTLSSKRGGDELWRYSREPLKQPLLKKLLAKEELAEEACLAFIAIMKYMGDLPSKRPRIGNEITDHIFDGPLKHEILRDEIYCQLMKQLTDNRNRMSEERGWELMWLSTGLFACSQQLLKELTVFLRTRRHPISQDSLHRLQKTIRNGQRKYPPHQVEVEAIQHKTTQIFHKVYFPDDTDEAFEVDSSTRAKDFCQNISQRLNLRSSEGFSLFVKIADKVISVPEGDFFFDFVRHLTDWIKKARPTRDGTNPQFTYQVFFMKKLWTNTVPGKDKNADLIFHYHQELPKLLRGYHKCSKEEAVKLAALVYRVRFGESKQELQAIPQMLRELVPSDLIKLQTTNDWKRSIVAAYNQDAGMSPEDAKVTFLKIVYRWPTFGSAFFEVKQTTEPNYPEMLLIAINKHGVSLIHPSSKDILVTHPFTRISNWSSGNTYFHMTIGNLVRGSKLLCETSLGYKMDDLLTSYISLMLTNMNKQRTIRIK.

A Myosin motor domain is found at 58-728 (QGVEDMISLG…HDLFLEQERD (671 aa)). 151-158 (GESGAGKT) is an ATP binding site. 2 actin-binding regions span residues 607-629 (LDSLMKTLSSCQPFFIRCIKPNE) and 707-721 (QLGHTKVFLKDAHDL). IQ domains lie at 731–753 (LTRKILILQRSIRGWVYRRRFLR), 754–783 (MRQAAVTIQKFWKGYAQRQRYKKMKIGYMR), 800–822 (LRGHIVRLQARIRGYLVRREYGL), and 823–852 (KMWAVIKIQSHVRRMIAMNRYQKLKLEYRR). Positions 886-914 (RLNEIERKEIEQELEERRRVEVKKNIIND) form a coiled coil. Positions 937–958 (PDSSSEAPTPHGGRETSVFNDL) are disordered. The 237-residue stretch at 1003–1239 (YSRKPLKHPL…PSWLELQATK (237 aa)) folds into the MyTH4 1 domain. One can recognise an FERM 1 domain in the interval 1244-1554 (IMLPITFMDG…YFLEGLKKRS (311 aa)). Residues 1552 to 1621 (KRSKFVIALQ…PAEIVYVLPS (70 aa)) enclose the SH3 domain. A MyTH4 2 domain is found at 1697–1845 (YSREPLKQPL…PHQVEVEAIQ (149 aa)). The FERM 2 domain occupies 1851 to 2154 (IFHKVYFPDD…SYISLMLTNM (304 aa)).

The protein belongs to the TRAFAC class myosin-kinesin ATPase superfamily. Myosin family. In terms of assembly, homodimerizes in a two headed molecule through the formation of a coiled-coil rod.

It is found in the cytoplasm. Its function is as follows. Myosins are actin-based motor molecules with ATPase activity. Unconventional myosins serve in intracellular movements: can function in cells as a single-molecule cargo transporter. A very slow and high-duty-ratio motor, may be suitable for tension maintenance of actin filaments. Their highly divergent tails are presumed to bind to membranous compartments, which would be moved relative to actin filaments. Plays a key role in the formation of cellular projections and other actin-based functions required for embryonic and larval viability. Necessary for auditory transduction: plays a role in Johnston organ (JO) organization by functioning in scolopidial apical attachment and therefore to acoustic stimulus propagation from the antenna a2/a3 joint to transducing elements. This is Myosin-VIIa from Aedes aegypti (Yellowfever mosquito).